Here is a 266-residue protein sequence, read N- to C-terminus: Eukaryotic translation initiation factor 3 subunit J (266 aa).

Disordered regions lie at residues 1–111 and 217–266; these read MAPS…EKDA and NEKM…DDFM. Positions 26–44 are enriched in acidic residues; that stretch reads DEEEEDVLDSWDAAEDSEV. Residues 40–82 adopt a coiled-coil conformation; the sequence is EDSEVEREKAAKAAEAKAKAEAEAAANKKSKAQRIQEKKAQRK. Basic and acidic residues-rich tracts occupy residues 45 to 61 and 73 to 85; these read EREKAAKAAEAKAKAEA and RIQEKKAQRKADA. Residues 86 to 97 are compositionally biased toward acidic residues; the sequence is DAEDSDDSDEDE. Composition is skewed to basic and acidic residues over residues 98-111 and 218-230; these read AERRARLRKTEKDA and EKMKEERAADKGN. Residues 254–266 are compositionally biased toward acidic residues; sequence SYDDDGLDDDDFM.

Belongs to the eIF-3 subunit J family. As to quaternary structure, component of the eukaryotic translation initiation factor 3 (eIF-3) complex.

Its subcellular location is the cytoplasm. In terms of biological role, component of the eukaryotic translation initiation factor 3 (eIF-3) complex, which is involved in protein synthesis of a specialized repertoire of mRNAs and, together with other initiation factors, stimulates binding of mRNA and methionyl-tRNAi to the 40S ribosome. The eIF-3 complex specifically targets and initiates translation of a subset of mRNAs involved in cell proliferation. In Aspergillus niger (strain ATCC MYA-4892 / CBS 513.88 / FGSC A1513), this protein is Eukaryotic translation initiation factor 3 subunit J (hcr1).